Reading from the N-terminus, the 296-residue chain is MMFKQYLQVTKPGIIFGNLISVIGGFLLASKGSIDYPLFIYTLVGVSLVVASGCVFNNYIDRDIDRKMERTKNRVLVKGLISPGVSLVYATLLGIAGFMLLWFGANPLACWLGVMGFVVYVGVYSLYMKRHSVYGTLIGSLSGAAPPVIGYCAVTGDFDSGAAILLAIFSLWQMPHSYAIAIFRFKDYQAANIPVLPVVKGISVAKNHITLYIIAFAVATLMLTLGGYAGYKYLVVAAAVSVWWLGMALRGYKVEDDKVWARKLFGFSIIAITALSIMMSVDFMVPNSQNLLTYVW.

Over Met1–Val9 the chain is Cytoplasmic. A helical transmembrane segment spans residues Thr10 to Leu28. The Periplasmic portion of the chain corresponds to Ala29–Pro37. A helical membrane pass occupies residues Leu38–Phe56. The Cytoplasmic segment spans residues Asn57 to Lys78. A helical membrane pass occupies residues Gly79 to Gly97. At Phe98–Pro107 the chain is on the periplasmic side. Residues Leu108–Leu126 traverse the membrane as a helical segment. Residues Tyr127 to Pro197 are Cytoplasmic-facing. The chain crosses the membrane as a helical span at residues Val198 to Phe216. Topologically, residues Ala217–Tyr228 are periplasmic. Residues Ala229 to Met247 form a helical membrane-spanning segment. The Cytoplasmic segment spans residues Ala248–Ser268. Residues Ile269–Asn287 form a helical membrane-spanning segment. At Ser288–Trp296 the chain is on the periplasmic side.

This sequence belongs to the UbiA prenyltransferase family. Protoheme IX farnesyltransferase subfamily.

It is found in the cell inner membrane. The enzyme catalyses heme b + (2E,6E)-farnesyl diphosphate + H2O = Fe(II)-heme o + diphosphate. Its pathway is porphyrin-containing compound metabolism; heme O biosynthesis; heme O from protoheme: step 1/1. Functionally, converts heme B (protoheme IX) to heme O by substitution of the vinyl group on carbon 2 of heme B porphyrin ring with a hydroxyethyl farnesyl side group. The sequence is that of Protoheme IX farnesyltransferase from Salmonella typhimurium (strain LT2 / SGSC1412 / ATCC 700720).